Consider the following 1018-residue polypeptide: Ubiquitin carboxyl-terminal hydrolase 35 (1018 aa).

Positions 441–926 (IGLINLGNTC…TAYVLFYRQR (486 aa)) constitute a USP domain. Residue cysteine 450 is the Nucleophile of the active site. Disordered regions lie at residues 544–566 (QKLK…STSV) and 610–757 (RLGS…GSEG). Residues 552–561 (PSPPEEPPAP) are compositionally biased toward pro residues. At serine 613 the chain carries Phosphoserine. 3 stretches are compositionally biased toward basic and acidic residues: residues 673–691 (QEER…TEKE), 699–709 (STRGEGEREKE), and 718–728 (KVEKETEKEAE). The active-site Proton acceptor is the histidine 862. Residues 984-1011 (HWGRGFDEDKDEDEGSPGGCNPAGGNGG) are disordered. The segment covering 999–1011 (SPGGCNPAGGNGG) has biased composition (gly residues).

Belongs to the peptidase C19 family. As to quaternary structure, homodimer (via C-terminal region). Interacts with HSP90AA1. Ubiquitinated by CHIP/STUB1 in an HSP90-dependent manner; leading to proteasomal degradation. This ubiquitination can be reversed through auto-deubiquitinating activity. In terms of tissue distribution, expressed in testis, pancreas and skeletal muscle.

The protein localises to the cytoplasm. It localises to the mitochondrion. It catalyses the reaction Thiol-dependent hydrolysis of ester, thioester, amide, peptide and isopeptide bonds formed by the C-terminal Gly of ubiquitin (a 76-residue protein attached to proteins as an intracellular targeting signal).. In terms of biological role, deubiquitinase that plays a role in different processes including cell cycle regulation, mitophagy or endoplasmic reticulum stress. Inhibits TNFalpha-induced NF-kappa-B activation through stabilizing TNIP2 protein via deubiquitination. Plays an essential role during mitosis by deubiquitinating and thereby regulating the levels of Aurora B/AURKB protein. In addition, regulates the protein levels of other key component of the chromosomal passenger complex (CPC) such as survivin/BIRC5 or Borealin/CDCA8 by enhancing their stability. Regulates the degradation of mitochondria through the process of autophagy termed mitophagy. The chain is Ubiquitin carboxyl-terminal hydrolase 35 (USP35) from Homo sapiens (Human).